The chain runs to 478 residues: Calcium/calmodulin-dependent protein kinase type II subunit alpha (478 aa).

Position 13 is a phosphotyrosine (Tyr13). The Protein kinase domain maps to Tyr13–Ile271. ATP-binding positions include Leu19–Val27 and Lys42. Asp135 (proton acceptor) is an active-site residue. Residue Ser257 is modified to Phosphoserine. The residue at position 286 (Thr286) is a Phosphothreonine; by autocatalysis. The interval Leu290–Lys300 is calmodulin-binding. The interval Thr310–Gly320 is interaction with BAALC. The interval Ser314–Glu341 is disordered. Over residues Lys322–Ser331 the composition is skewed to basic and acidic residues. Residues Ser330, Ser331, and Ser333 each carry the phosphoserine modification. Thr336 and Thr337 each carry phosphothreonine. At Ser404 the chain carries Phosphoserine.

This sequence belongs to the protein kinase superfamily. CAMK Ser/Thr protein kinase family. CaMK subfamily. In terms of assembly, there are 4 genes encoding calcium/calmodulin-dependent protein kinase type II chains: CAMK2A, CAMK2B, CAMK2G and CAMK2D. The corresponding proteins assemble into homo- or heteromultimeric holoenzymes composed of 12 subunits with two hexameric rings stacked one on top of the other. Interacts with BAALC. Interacts with MPDZ. Interacts with SYN1. Interacts with CAMK2N2. Interacts with SYNGAP1. Interacts with SYNPO2. Interacts with SHANK3. Interacts with GRIN2B. Interacts with CACNB2. Interacts with LRRC7. Interacts with GRM5. Interacts with DAGLA (via C-terminal); this interaction is enhanced by autophosphorylation of CAMK2A at Thr-286. Interacts with CAMK2N1; this interaction requires CAMK2A activation by Ca(2+). The cofactor is Mg(2+). Autophosphorylation of Thr-286 following activation by Ca(2+)/calmodulin. Phosphorylation of Thr-286 locks the kinase into an activated state. Post-translationally, palmitoylated. Probably palmitoylated by ZDHHC3 and ZDHHC7.

The protein resides in the synapse. Its subcellular location is the postsynaptic density. It is found in the cell projection. The protein localises to the dendritic spine. It localises to the dendrite. It catalyses the reaction L-seryl-[protein] + ATP = O-phospho-L-seryl-[protein] + ADP + H(+). The enzyme catalyses L-threonyl-[protein] + ATP = O-phospho-L-threonyl-[protein] + ADP + H(+). Activated by Ca(2+)/calmodulin. Binding of calmodulin results in conformational change that relieves intrasteric autoinhibition and allows autophosphorylation of Thr-286 which turns the kinase in a constitutively active form and confers to the kinase a Ca(2+)-independent activity. Its function is as follows. Calcium/calmodulin-dependent protein kinase that functions autonomously after Ca(2+)/calmodulin-binding and autophosphorylation, and is involved in various processes, such as synaptic plasticity, neurotransmitter release and long-term potentiation. Member of the NMDAR signaling complex in excitatory synapses, it regulates NMDAR-dependent potentiation of the AMPAR and therefore excitatory synaptic transmission. Regulates dendritic spine development. Also regulates the migration of developing neurons. Phosphorylates the transcription factor FOXO3 to activate its transcriptional activity. Phosphorylates the transcription factor ETS1 in response to calcium signaling, thereby decreasing ETS1 affinity for DNA. In response to interferon-gamma (IFN-gamma) stimulation, catalyzes phosphorylation of STAT1, stimulating the JAK-STAT signaling pathway. In response to interferon-beta (IFN-beta) stimulation, stimulates the JAK-STAT signaling pathway. Acts as a negative regulator of 2-arachidonoylglycerol (2-AG)-mediated synaptic signaling via modulation of DAGLA activity. The protein is Calcium/calmodulin-dependent protein kinase type II subunit alpha (CAMK2A) of Pongo abelii (Sumatran orangutan).